The primary structure comprises 424 residues: CinA-like protein (424 aa).

This sequence belongs to the CinA family.

This chain is CinA-like protein, found in Shewanella denitrificans (strain OS217 / ATCC BAA-1090 / DSM 15013).